The primary structure comprises 150 residues: Arginine repressor (150 aa).

The protein belongs to the ArgR family.

The protein localises to the cytoplasm. It functions in the pathway amino-acid biosynthesis; L-arginine biosynthesis [regulation]. Regulates arginine biosynthesis genes. The protein is Arginine repressor of Thermoanaerobacter sp. (strain X514).